A 197-amino-acid polypeptide reads, in one-letter code: Ion-translocating oxidoreductase complex subunit B (197 aa).

The segment at 1-26 (MSTILIAIIALAVLAAVFGAILGFAS) is hydrophobic. The 59-residue stretch at 32 to 90 (EADPIVDQIDTILPQTQCGQCGYPGCRPYAEAIANGDKINKCPPGGQATIEKLADLMGV) folds into the 4Fe-4S domain. [4Fe-4S] cluster is bound by residues cysteine 49, cysteine 52, cysteine 57, cysteine 73, cysteine 114, cysteine 117, cysteine 120, cysteine 124, cysteine 144, cysteine 147, cysteine 150, and cysteine 154. 2 4Fe-4S ferredoxin-type domains span residues 105-134 (TVAF…GGTK) and 135-164 (ALHT…MIPV).

This sequence belongs to the 4Fe4S bacterial-type ferredoxin family. RnfB subfamily. In terms of assembly, the complex is composed of six subunits: RnfA, RnfB, RnfC, RnfD, RnfE and RnfG. It depends on [4Fe-4S] cluster as a cofactor.

It localises to the cell inner membrane. Part of a membrane-bound complex that couples electron transfer with translocation of ions across the membrane. The polypeptide is Ion-translocating oxidoreductase complex subunit B (Vibrio atlanticus (strain LGP32) (Vibrio splendidus (strain Mel32))).